A 173-amino-acid chain; its full sequence is Small ribosomal subunit protein mS25 (173 aa).

Belongs to the mitochondrion-specific ribosomal protein mS25 family. In terms of assembly, component of the mitochondrial small ribosomal subunit (mt-SSU). Mature mammalian 55S mitochondrial ribosomes consist of a small (28S) and a large (39S) subunit. The 28S small subunit contains a 12S ribosomal RNA (12S mt-rRNA) and 30 different proteins. The 39S large subunit contains a 16S rRNA (16S mt-rRNA), a copy of mitochondrial valine transfer RNA (mt-tRNA(Val)), which plays an integral structural role, and 52 different proteins.

It localises to the mitochondrion. The protein is Small ribosomal subunit protein mS25 (MRPS25) of Homo sapiens (Human).